The sequence spans 184 residues: MNYQSEWLRIDPIKGSRRFSNLCWAFILVLGAIGFSLVGFSSYLGRDLIPILSSQQIIFLPQGIVMCFYGIAGIFLGFYLWCTILWNVGSGYNQFNKREGIVYLFRWGFPGENRRICIRFMIKDIQAIRMEIQEGFSPRRVLYLRIKGQQDVPLTRLDEELTLREMEEKAAELARFLRVSIEGF.

2 helical membrane passes run L22–S42 and I64–I84.

Belongs to the Ycf4 family.

The protein localises to the plastid. The protein resides in the chloroplast thylakoid membrane. Seems to be required for the assembly of the photosystem I complex. The polypeptide is Photosystem I assembly protein Ycf4 (Angiopteris evecta (Mule's foot fern)).